A 1968-amino-acid chain; its full sequence is Signal element on autosome protein 2 (1968 aa).

Over residues 72–88 the composition is skewed to low complexity; the sequence is TSSSFSSSLATTTTTSS. 2 disordered regions span residues 72–252 and 271–364; these read TSSS…TPTQ and QVQQ…VQEQ. The span at 107–119 shows a compositional bias: basic residues; it reads SHHHPSSSHHHHP. 4 stretches are compositionally biased toward low complexity: residues 120–134, 144–165, 219–232, and 298–338; these read GQQQ…SHLQ, HPYY…YGQA, DQPS…LPPL, and LSSI…SSSS. Polar residues predominate over residues 346–362; the sequence is PNASSSSLIKRQSQDVQ. A C2H2-type 1 zinc finger spans residues 413-440; sequence YQCPNCNRNLANARNLQRHRQTCGSAQH. 2 disordered regions span residues 451 to 499 and 538 to 601; these read RSPP…LYSP and WSRD…TLDP. The span at 452 to 467 shows a compositional bias: pro residues; that stretch reads SPPPCASAPPVAPPTA. Positions 472 to 482 are enriched in polar residues; the sequence is FQHHNSTGNLT. Positions 483–498 are enriched in low complexity; that stretch reads LSYSSSSSRHQSSLYS. A compositionally biased stretch (basic and acidic residues) spans 570–594; sequence PLHHLDSFDSADHRKETPRECHEPD. Residues 651–672 form a C2H2-type 2; degenerate zinc finger; the sequence is FTCEACKKSVSSERSLRRHYNT. Disordered stretches follow at residues 681-712 and 785-854; these read AASG…GPEK and VTSA…TGNP. The segment covering 690–702 has biased composition (basic residues); the sequence is TTKRKPATKRPSK. The segment covering 794–804 has biased composition (low complexity); the sequence is HQLPHQQPQQQ. Acidic residues predominate over residues 812–824; that stretch reads LLNEQDESADDDG. The span at 827–851 shows a compositional bias: low complexity; the sequence is RSSSGTVSNSTTTTTTATTTSSKST. The C2H2-type 3; degenerate zinc-finger motif lies at 856–875; it reads FTCEHCARQLCSMSNLKRHR. Disordered stretches follow at residues 882 to 905, 975 to 1069, 1083 to 1227, and 1246 to 1273; these read ASSS…TAPA, GDAL…EHKN, RMDA…SPLD, and PGPL…SQQA. 3 stretches are compositionally biased toward low complexity: residues 981–1015, 1023–1046, and 1108–1131; these read QQHQ…AGRI, ILNQ…MLNP, and PQRS…YQVQ. Pro residues predominate over residues 1136–1146; the sequence is PLPPMQLPPLQ. Over residues 1147-1185 the composition is skewed to low complexity; that stretch reads NPHNQQQQHQMLHQSQMNYQQVQQVQQVQHVQQQQNLQN. Polar residues-rich tracts occupy residues 1201–1211 and 1251–1273; these read APGNRSRSHSN and QGQS…SQQA. The C2H2-type 4 zinc-finger motif lies at 1274–1297; sequence YICPECKKTYASRKNVKRHRMAVH. Disordered stretches follow at residues 1333-1478, 1569-1608, 1624-1671, and 1769-1822; these read TPDS…ADEE, SVGL…QQQQ, HPPM…LTCS, and ADRQ…PSTN. Basic and acidic residues predominate over residues 1388–1403; the sequence is ERQEPPKKPVADDHKS. 2 stretches are compositionally biased toward pro residues: residues 1407 to 1421 and 1429 to 1445; these read PLPP…PPPY and LNPP…PPLQ. Over residues 1589-1608 the composition is skewed to low complexity; sequence QHPQQHPQQHPQQHPQQQQQ. Over residues 1624-1633 the composition is skewed to polar residues; the sequence is HPPMPVSQQF. The C2H2-type 5; degenerate zinc finger occupies 1668-1694; sequence LTCSGCKKILGSDYSLRRHRAGCADVQ. The segment covering 1800–1811 has biased composition (low complexity); sequence SSSSSSSTSSAS. The C2H2-type 6 zinc finger occupies 1826–1858; that stretch reads HYCQFPECGKNFSSEWNLARHTRESCKMTTRAH.

Expressed in seam cells, intestine cells, pharyngeal muscles and nerve ring neurons.

It localises to the nucleus. It is found in the cytoplasm. Functionally, RNA-binding protein, which regulates the expression of proteins required to control developmental timing of events during the L2 to L3 larval stage switch. Binds to the 3'UTR of the transcript of the heterochronic protein lin-28 to post-transcriptionally negatively regulate its expression in certain tissue types in the later larval stages. During larval development, controls the timing of seam cell division and terminal differentiation into adult alae. In vitro, it can also bind to DNA through its first zinc finger. May bind directly or indirectly to the promoter of the sex-determining factor xol-1 to activate its transcription. Its activation of xol-1 transcription controls sex determination and X chromosome dosage compensation to promote male development. Through the negative regulation of lin-28 transcript, it also has a role in the fox-1-sex-1-mediated determination of sexual fate. Acts in the intestine to play a role in regulating adult lifespan. This chain is Signal element on autosome protein 2, found in Caenorhabditis elegans.